A 427-amino-acid chain; its full sequence is Isocitrate dehydrogenase [NADP] (427 aa).

Residue Thr-114 coordinates NADP(+). The D-threo-isocitrate site is built by Ser-123, Asn-125, Arg-129, Arg-139, and Arg-163. Residue Asp-317 coordinates Mg(2+). NADP(+) contacts are provided by residues 349–355 (HGTAPKY), Asn-362, Tyr-401, and Arg-405.

This sequence belongs to the isocitrate and isopropylmalate dehydrogenases family. As to quaternary structure, homodimer. The cofactor is Mg(2+). Requires Mn(2+) as cofactor.

It carries out the reaction D-threo-isocitrate + NADP(+) = 2-oxoglutarate + CO2 + NADPH. Functionally, catalyzes the oxidative decarboxylation of isocitrate to 2-oxoglutarate and carbon dioxide with the concomitant reduction of NADP(+). The chain is Isocitrate dehydrogenase [NADP] (icd) from Coxiella burnetii (strain RSA 493 / Nine Mile phase I).